Consider the following 396-residue polypeptide: Elongation factor Tu 1 (396 aa).

The region spanning 10 to 206 (KPHINVGTIG…VLDSYIPEPQ (197 aa)) is the tr-type G domain. Residues 19-26 (GHVDHGKT) form a G1 region. GTP is bound at residue 19-26 (GHVDHGKT). Threonine 26 contributes to the Mg(2+) binding site. Positions 60 to 64 (GITIN) are G2. Residues 81–84 (DCPG) form a G3 region. Residues 81–85 (DCPGH) and 136–139 (NKAD) contribute to the GTP site. The G4 stretch occupies residues 136 to 139 (NKAD). A G5 region spans residues 174-176 (SAL).

This sequence belongs to the TRAFAC class translation factor GTPase superfamily. Classic translation factor GTPase family. EF-Tu/EF-1A subfamily. Monomer.

The protein resides in the cytoplasm. It catalyses the reaction GTP + H2O = GDP + phosphate + H(+). Its function is as follows. GTP hydrolase that promotes the GTP-dependent binding of aminoacyl-tRNA to the A-site of ribosomes during protein biosynthesis. The sequence is that of Elongation factor Tu 1 from Nitrosomonas eutropha (strain DSM 101675 / C91 / Nm57).